The following is a 420-amino-acid chain: MVSAGIEAMNVFGGTAYLDVMELAKYRHLDTARFENLLMKEKAVALPYEDPVTFGVNAAKPIIDALSEAEKDRIELLITCSESGIDFGKSLSTYIHEYLGLNRNCRLFEVKQACYSGTAGFQMAVNFILSQTSPGAKALVIASDISRFLIAEGGDALSEDWSYAEPSAGAGAVAVLVGENPEVFQIDPGANGYYGYEVMDTCRPIPDSEAGDSDLSLMSYLDCCEQTFLEYQKRVPGANYQDTFQYLAYHTPFGGMVKGAHRTMMRKVAKVKTSGIETDFLTRVKPGLNYCQRVGNIMGAALFLALASTIDQGRFDTPKRIGCFSYGSGCCSEFYSGITTPQGQERQRTFGIEKHLDRRYQLSMEEYELLFKGSGMVRFGTRNVKLDFEMIPGIMQSTQEKPRLFLEEISEFHRKYRWIS.

The Proton donor/acceptor role is filled by E82. Residue C114 is the Acyl-thioester intermediate of the active site. H250 acts as the Proton donor/acceptor in catalysis.

It belongs to the thiolase-like superfamily. HMG-CoA synthase family.

Its subcellular location is the cytoplasm. It carries out the reaction 3-oxobutanoyl-[ACP] + acetyl-[ACP] + H2O = (3S)-hydroxy-3-methylglutaryl-[ACP] + holo-[ACP] + H(+). Its pathway is antibiotic biosynthesis; bacillaene biosynthesis. Involved in some intermediate steps for the synthesis of the antibiotic polyketide bacillaene which is involved in secondary metabolism. It catalyzes the aldol condensation between the acetyl group attached to the acyl-carrier-protein AcpK (Ac-AcpK) and a beta-ketothioester polyketide intermediate linked to one of the consecutive thiolation domains of PksL. This is Polyketide biosynthesis 3-hydroxy-3-methylglutaryl-ACP synthase PksG (pksG) from Bacillus subtilis (strain 168).